Here is a 128-residue protein sequence, read N- to C-terminus: Otoraplin (128 aa).

An N-terminal signal peptide occupies residues 1–18 (MARILILLLGGLVVLCAG). Disulfide bonds link Cys32-Cys37 and Cys55-Cys127. The SH3 domain occupies 39 to 110 (YTISLARAQE…PSNLVKEQRV (72 aa)).

The protein belongs to the MIA/OTOR family. As to expression, highly expressed in cochlea.

Its subcellular location is the secreted. This is Otoraplin (Otor) from Mus musculus (Mouse).